The sequence spans 103 residues: MERQQQQQQQLRNLRDFLLVYNRMTELCFQRCVPSLHHRALDAEEEACLHSCAGKLIHSNHRLMAAYVQLMPALVQRRIADYEAASAVPGVAAEQPGVSPSGS.

The Twin CX3C motif motif lies at 28 to 52 (CFQRCVPSLHHRALDAEEEACLHSC). Cystine bridges form between C28/C52 and C32/C48.

This sequence belongs to the small Tim family. In terms of assembly, component of the TIM22 complex, which core is composed of TIMM22, associated with TIMM10 (TIMM10A and/or TIMM10B), TIMM9, AGK and TIMM29. As to expression, ubiquitous, with highest expression in heart, kidney, liver and skeletal muscle.

The protein resides in the mitochondrion inner membrane. Functionally, component of the TIM22 complex, a complex that mediates the import and insertion of multi-pass transmembrane proteins into the mitochondrial inner membrane. The TIM22 complex forms a twin-pore translocase that uses the membrane potential as the external driving force. In the TIM22 complex, it may act as a docking point for the soluble 70 kDa complex that guides the target proteins in transit through the aqueous mitochondrial intermembrane space. The sequence is that of Mitochondrial import inner membrane translocase subunit Tim10 B (TIMM10B) from Homo sapiens (Human).